The sequence spans 232 residues: Ferric nitrobindin-like protein (232 aa).

The span at 1-10 shows a compositional bias: polar residues; it reads MSENETSKTG. The interval 1 to 33 is disordered; sequence MSENETSKTGGNAGVPGSGADAPSLSDSPAISG. Positions 85-91 match the GXWXGXG motif; sequence GVWRGEG.

This sequence belongs to the nitrobindin family.

The protein is Ferric nitrobindin-like protein of Corynebacterium efficiens (strain DSM 44549 / YS-314 / AJ 12310 / JCM 11189 / NBRC 100395).